The primary structure comprises 284 residues: MTELIDGKALSQKMQAELGRKVERLKEQHGIIPGLAVILVGDNPASQVYVRNKERSALEAGFKSETLRLSESISQEELIDIIHQYNEDKSIHGILVQLPLPQHINDKKIILAIDPKKDVDGFHPMNTGHLWSGRPMMVPCTPAGIMEMFREYHVDLEGKHAVIIGRSNIVGKPMAQLLLDKNATVTLTHSRTRNLSEVTKEADILIVAIGQGHFVTKDFVKEGAVVIDVGMNRDENGKLIGDVVFEQVAEVASMITPVPGGVGPMTITMLLEQTYQAALRSVSL.

NADP(+) contacts are provided by residues 165–167 (GRS) and serine 190.

It belongs to the tetrahydrofolate dehydrogenase/cyclohydrolase family. Homodimer.

The enzyme catalyses (6R)-5,10-methylene-5,6,7,8-tetrahydrofolate + NADP(+) = (6R)-5,10-methenyltetrahydrofolate + NADPH. The catalysed reaction is (6R)-5,10-methenyltetrahydrofolate + H2O = (6R)-10-formyltetrahydrofolate + H(+). The protein operates within one-carbon metabolism; tetrahydrofolate interconversion. In terms of biological role, catalyzes the oxidation of 5,10-methylenetetrahydrofolate to 5,10-methenyltetrahydrofolate and then the hydrolysis of 5,10-methenyltetrahydrofolate to 10-formyltetrahydrofolate. In Streptococcus agalactiae serotype Ia (strain ATCC 27591 / A909 / CDC SS700), this protein is Bifunctional protein FolD.